The sequence spans 158 residues: C-type lectin TsL (158 aa).

The N-terminal stretch at 1-23 (MGRFIFVSFGLLVVFLSLSGAKG) is a signal peptide. One can recognise a C-type lectin domain in the interval 24–158 (SCCTNDSLPM…KNSFLCQCKF (135 aa)). 4 cysteine pairs are disulfide-bonded: C26/C37, C54/C154, C61/C156, and C129/C146. N-linked (GlcNAc...) (high mannose) asparagine glycosylation occurs at N28. The Ca(2+) site is built by Q119, D121, E127, N142, and D143. The Galactose-binding motif lies at 119 to 121 (QPD).

It belongs to the true venom lectin family. Homodimer; disulfide-linked. Expressed by the venom gland.

The protein localises to the secreted. Its function is as follows. Galactose-binding protein which recognizes specific carbohydrate structures and agglutinates a variety of animal cells by binding to cell-surface glycoproteins and glycolipids. May be a calcium-dependent lectin. The chain is C-type lectin TsL from Trimeresurus stejnegeri (Chinese green tree viper).